A 1164-amino-acid chain; its full sequence is Phytochrome D (1164 aa).

Residues 1-55 (MVSGGGSKTSGGEAASSGHRRSRHTSAAEQAQSSANKALRSQNQQPQNHGGGTES) form a disordered region. Residues 25-55 (TSAAEQAQSSANKALRSQNQQPQNHGGGTES) are compositionally biased toward polar residues. In terms of domain architecture, GAF spans 255–437 (DIKLLCDTVV…AFGLQLNMEL (183 aa)). Cysteine 360 serves as a coordination point for phytochromobilin. PAS domains follow at residues 656–727 (VARE…LKGD) and 790–861 (DYKA…MIVL). The region spanning 938–1157 (YIFQVIKNPL…LIVIELPVPL (220 aa)) is the Histidine kinase domain.

The protein belongs to the phytochrome family. As to quaternary structure, homodimer. Post-translationally, contains one covalently linked phytochromobilin chromophore.

Functionally, regulatory photoreceptor which exists in two forms that are reversibly interconvertible by light: the Pr form that absorbs maximally in the red region of the spectrum and the Pfr form that absorbs maximally in the far-red region. Photoconversion of Pr to Pfr induces an array of morphogenic responses, whereas reconversion of Pfr to Pr cancels the induction of those responses. Pfr controls the expression of a number of nuclear genes including those encoding the small subunit of ribulose-bisphosphate carboxylase, chlorophyll A/B binding protein, protochlorophyllide reductase, rRNA, etc. It also controls the expression of its own gene(s) in a negative feedback fashion. The polypeptide is Phytochrome D (PHYD) (Arabidopsis thaliana (Mouse-ear cress)).